We begin with the raw amino-acid sequence, 383 residues long: Queuine tRNA-ribosyltransferase (383 aa).

Asp-92 serves as the catalytic Proton acceptor. Substrate contacts are provided by residues 92 to 96 (DSGGF), Asp-146, Gln-190, and Gly-217. Positions 248–254 (GVGKPED) are RNA binding. Catalysis depends on Asp-267, which acts as the Nucleophile. The interval 272 to 276 (TRNAR) is RNA binding; important for wobble base 34 recognition. The Zn(2+) site is built by Cys-310, Cys-312, Cys-315, and His-341.

This sequence belongs to the queuine tRNA-ribosyltransferase family. In terms of assembly, homodimer. Within each dimer, one monomer is responsible for RNA recognition and catalysis, while the other monomer binds to the replacement base PreQ1. It depends on Zn(2+) as a cofactor.

The enzyme catalyses 7-aminomethyl-7-carbaguanine + guanosine(34) in tRNA = 7-aminomethyl-7-carbaguanosine(34) in tRNA + guanine. It participates in tRNA modification; tRNA-queuosine biosynthesis. Functionally, catalyzes the base-exchange of a guanine (G) residue with the queuine precursor 7-aminomethyl-7-deazaguanine (PreQ1) at position 34 (anticodon wobble position) in tRNAs with GU(N) anticodons (tRNA-Asp, -Asn, -His and -Tyr). Catalysis occurs through a double-displacement mechanism. The nucleophile active site attacks the C1' of nucleotide 34 to detach the guanine base from the RNA, forming a covalent enzyme-RNA intermediate. The proton acceptor active site deprotonates the incoming PreQ1, allowing a nucleophilic attack on the C1' of the ribose to form the product. After dissociation, two additional enzymatic reactions on the tRNA convert PreQ1 to queuine (Q), resulting in the hypermodified nucleoside queuosine (7-(((4,5-cis-dihydroxy-2-cyclopenten-1-yl)amino)methyl)-7-deazaguanosine). The chain is Queuine tRNA-ribosyltransferase from Psychrobacter cryohalolentis (strain ATCC BAA-1226 / DSM 17306 / VKM B-2378 / K5).